The primary structure comprises 206 residues: Large ribosomal subunit protein uL4 (206 aa).

Residues 63–97 are disordered; sequence MYKQKGTGRARHHSARAPQFRGGGKAHGPVVRSHE. The span at 64 to 77 shows a compositional bias: basic residues; sequence YKQKGTGRARHHSA.

The protein belongs to the universal ribosomal protein uL4 family. As to quaternary structure, part of the 50S ribosomal subunit.

Its function is as follows. One of the primary rRNA binding proteins, this protein initially binds near the 5'-end of the 23S rRNA. It is important during the early stages of 50S assembly. It makes multiple contacts with different domains of the 23S rRNA in the assembled 50S subunit and ribosome. Functionally, forms part of the polypeptide exit tunnel. The chain is Large ribosomal subunit protein uL4 from Rhizobium etli (strain ATCC 51251 / DSM 11541 / JCM 21823 / NBRC 15573 / CFN 42).